Reading from the N-terminus, the 749-residue chain is MLETNKNHATAWQGFKNGRWNRHVDVREFIQLNYTLYEGNDSFLAGPTEATSKLWEQVMQLSKEERERGGMWDMDTKVASTITSHDAGYLDKDLETIVGVQTEKPFKRSMQPFGGIRMAKAACEAYGYELDEETEKIFTDYRKTHNQGVFDAYSREMLNCRKAGVITGLPDAYGRGRIIGDYRRVALYGVDFLMEEKMHDFNTMSTEMSEDVIRLREELSEQYRALKELKELGQKYGFDLSRPAENFKEAVQWLYLAYLAAIKEQNGAAMSLGRTSTFLDIYAERDLKAGVITESEVQEIIDHFIMKLRIVKFARTPDYNELFSGDPTWVTESIGGVGIDGRPLVTKNSFRFLHSLDNLGPAPEPNLTVLWSVRLPDNFKTYCAKMSIKTSSIQYENDDIMRESYGDDYGIACCVSAMTIGKQMQFFGARANLAKTLLYAINGGKDEKSGAQVGPNFEGINSEVLEYDEVFKKFDQMMDWLAGVYINSLNVIHYMHDKYSYERIEMALHDTEIVRTMATGIAGLSVAADSLSAIKYAQVKPIRNEEGLVVDFEIEGDFPKYGNNDDRVDDIAVDLVERFMTKLRSHKTYRDSEHTMSVLTITSNVVYGKKTGNTPDGRKAGEPFAPGANPMHGRDQKGALSSLSSVAKIPYDCCKDGISNTFSIVPKSLGKEPEDQNRNLTSMLDGYAMQCGHHLNINVFNRETLIDAMEHPEEYPQLTIRVSGYAVNFIKLTREQQLDVISRTFHESM.

Residues 3-619 (ETNKNHATAW…KTGNTPDGRK (617 aa)) form the PFL domain. The active-site S-acetylcysteine intermediate is cysteine 413. The Cysteine radical intermediate role is filled by cysteine 414. The 124-residue stretch at 626-749 (PGANPMHGRD…VISRTFHESM (124 aa)) folds into the Glycine radical domain. Glycine radical is present on glycine 724.

Belongs to the glycyl radical enzyme (GRE) family. PFL subfamily. Homodimer.

The protein resides in the cytoplasm. It carries out the reaction formate + acetyl-CoA = pyruvate + CoA. The protein operates within fermentation; pyruvate fermentation; formate from pyruvate: step 1/1. Its function is as follows. Catalyzes the conversion of pyruvate to formate and acetyl-CoA. The chain is Formate acetyltransferase (pflB) from Staphylococcus aureus (strain USA300).